Here is a 315-residue protein sequence, read N- to C-terminus: 4-hydroxy-3-methylbut-2-enyl diphosphate reductase (315 aa).

Position 12 (C12) interacts with [4Fe-4S] cluster. The (2E)-4-hydroxy-3-methylbut-2-enyl diphosphate site is built by H41 and H74. The dimethylallyl diphosphate site is built by H41 and H74. Residues H41 and H74 each coordinate isopentenyl diphosphate. C96 lines the [4Fe-4S] cluster pocket. H124 contributes to the (2E)-4-hydroxy-3-methylbut-2-enyl diphosphate binding site. H124 provides a ligand contact to dimethylallyl diphosphate. Residue H124 participates in isopentenyl diphosphate binding. Catalysis depends on E126, which acts as the Proton donor. T168 provides a ligand contact to (2E)-4-hydroxy-3-methylbut-2-enyl diphosphate. Residue C198 coordinates [4Fe-4S] cluster. Residues S226, S227, N228, and S270 each coordinate (2E)-4-hydroxy-3-methylbut-2-enyl diphosphate. Positions 226, 227, 228, and 270 each coordinate dimethylallyl diphosphate. Isopentenyl diphosphate is bound by residues S226, S227, N228, and S270.

It belongs to the IspH family. Requires [4Fe-4S] cluster as cofactor.

It catalyses the reaction isopentenyl diphosphate + 2 oxidized [2Fe-2S]-[ferredoxin] + H2O = (2E)-4-hydroxy-3-methylbut-2-enyl diphosphate + 2 reduced [2Fe-2S]-[ferredoxin] + 2 H(+). The enzyme catalyses dimethylallyl diphosphate + 2 oxidized [2Fe-2S]-[ferredoxin] + H2O = (2E)-4-hydroxy-3-methylbut-2-enyl diphosphate + 2 reduced [2Fe-2S]-[ferredoxin] + 2 H(+). Its pathway is isoprenoid biosynthesis; dimethylallyl diphosphate biosynthesis; dimethylallyl diphosphate from (2E)-4-hydroxy-3-methylbutenyl diphosphate: step 1/1. It functions in the pathway isoprenoid biosynthesis; isopentenyl diphosphate biosynthesis via DXP pathway; isopentenyl diphosphate from 1-deoxy-D-xylulose 5-phosphate: step 6/6. Its function is as follows. Catalyzes the conversion of 1-hydroxy-2-methyl-2-(E)-butenyl 4-diphosphate (HMBPP) into a mixture of isopentenyl diphosphate (IPP) and dimethylallyl diphosphate (DMAPP). Acts in the terminal step of the DOXP/MEP pathway for isoprenoid precursor biosynthesis. This Pseudomonas entomophila (strain L48) protein is 4-hydroxy-3-methylbut-2-enyl diphosphate reductase.